The sequence spans 147 residues: Hemoglobin subunit beta-1 (147 aa).

In terms of domain architecture, Globin spans E3–H147. Positions 64 and 93 each coordinate heme b.

The protein belongs to the globin family. As to quaternary structure, heterotetramer of two alpha chains and two beta chains. As to expression, red blood cells.

Its function is as follows. Involved in oxygen transport from gills to the various peripheral tissues. The chain is Hemoglobin subunit beta-1 (hbb1) from Pagothenia borchgrevinki (Bald rockcod).